Consider the following 354-residue polypeptide: Abasic site processing protein HMCES (354 aa).

The active-site Nucleophile is the Cys-2. Cys-2 carries the thiazolidine linkage to a ring-opened DNA abasic site modification. Glu-127 is a catalytic residue. Glycyl lysine isopeptide (Lys-Gly) (interchain with G-Cter in SUMO2) cross-links involve residues Lys-148 and Lys-151. Ser-160 is subject to Phosphoserine. Lys-276 is covalently cross-linked (Glycyl lysine isopeptide (Lys-Gly) (interchain with G-Cter in SUMO2)). Residues 292–354 (ATKSPKKEDS…EPVAKRPYSQ (63 aa)) are disordered. Ser-295 bears the Phosphoserine mark. A compositionally biased stretch (basic and acidic residues) spans 296–309 (PKKEDSKTPQKEES). Lys-306 participates in a covalent cross-link: Glycyl lysine isopeptide (Lys-Gly) (interchain with G-Cter in SUMO2). At Ser-322 the chain carries Phosphoserine. A PIP-box motif is present at residues 332–338 (GLLEQWL). Over residues 337-348 (WLKREKEEEPVA) the composition is skewed to basic and acidic residues. Glycyl lysine isopeptide (Lys-Gly) (interchain with G-Cter in SUMO2) cross-links involve residues Lys-339 and Lys-342.

The protein belongs to the SOS response-associated peptidase family. In terms of assembly, interacts (via PIP-box motif) with PCNA. Ubiquitinated; the covalent HMCES DNA-protein cross-link is ubiquitinated, leading to its degradation by the proteasome.

The protein localises to the chromosome. With respect to regulation, formation and reversal of DNA-protein cross-link depends on DNA context. Catalyzes formation of the thiazolidine linkage in presence of abasic sites in single-stranded DNA. Mediates the reversal of the thiazolidine cross-link in presence of double stranded DNA. In terms of biological role, sensor of abasic sites in single-stranded DNA (ssDNA) required to preserve genome integrity by promoting error-free repair of abasic sites. Acts as an enzyme that recognizes and binds abasic sites in ssDNA at replication forks and chemically modifies the lesion by forming a covalent cross-link with DNA: forms a stable thiazolidine linkage between a ring-opened abasic site and the alpha-amino and sulfhydryl substituents of its N-terminal catalytic cysteine residue. Promotes error-free repair by protecting abasic sites from translesion synthesis (TLS) polymerases and endonucleases that are error-prone and would generate mutations and double-strand breaks. The HMCES DNA-protein cross-link is then either reversed or degraded. HMCES is able to catalyze the reversal of its thiazolidine cross-link and cycle between a cross-link and a non-cross-linked state depending on DNA context: mediates self-reversal of the thiazolidine cross-link in double stranded DNA, allowing APEX1 to initiate downstream repair of abasic sites. The HMCES DNA-protein cross-link can also be degraded by the SPRTN metalloprotease following unfolding by the BRIP1/FANCJ helicase. Has preference for ssDNA, but can also accommodate double-stranded DNA with 3' or 5' overhang (dsDNA), and dsDNA-ssDNA 3' junction. Plays a protective role during somatic hypermutation of immunoglobulin genes in B-cells: acts via its ability to form covalent cross-links with abasic sites, thereby limiting the accumulation of deletions in somatic hypermutation target regions. Also involved in class switch recombination (CSR) in B-cells independently of the formation of a DNA-protein cross-link: acts by binding and protecting ssDNA overhangs to promote DNA double-strand break repair through the microhomology-mediated alternative-end-joining (Alt-EJ) pathway. Acts as a protease: mediates autocatalytic processing of its N-terminal methionine in order to expose the catalytic cysteine. This Pongo abelii (Sumatran orangutan) protein is Abasic site processing protein HMCES.